The sequence spans 251 residues: 2,3-bisphosphoglycerate-dependent phosphoglycerate mutase (251 aa).

Residues 8 to 15 (RHGESLWN), 21 to 22 (TG), arginine 60, 87 to 90 (ERHY), lysine 98, 114 to 115 (RR), and 183 to 184 (GN) each bind substrate. Catalysis depends on histidine 9, which acts as the Tele-phosphohistidine intermediate. Glutamate 87 (proton donor/acceptor) is an active-site residue.

It belongs to the phosphoglycerate mutase family. BPG-dependent PGAM subfamily.

The enzyme catalyses (2R)-2-phosphoglycerate = (2R)-3-phosphoglycerate. Its pathway is carbohydrate degradation; glycolysis; pyruvate from D-glyceraldehyde 3-phosphate: step 3/5. Its function is as follows. Catalyzes the interconversion of 2-phosphoglycerate and 3-phosphoglycerate. In Thermoanaerobacter sp. (strain X514), this protein is 2,3-bisphosphoglycerate-dependent phosphoglycerate mutase.